We begin with the raw amino-acid sequence, 159 residues long: 2-C-methyl-D-erythritol 2,4-cyclodiphosphate synthase (159 aa).

Positions 8 and 10 each coordinate a divalent metal cation. 4-CDP-2-C-methyl-D-erythritol 2-phosphate-binding positions include 8-10 (DVH) and 34-35 (HS). His42 lines the a divalent metal cation pocket. 4-CDP-2-C-methyl-D-erythritol 2-phosphate-binding positions include 56-58 (DIG), 61-65 (FPDTD), 132-135 (TTTE), Phe139, and Arg142.

Belongs to the IspF family. As to quaternary structure, homotrimer. A divalent metal cation is required as a cofactor.

The catalysed reaction is 4-CDP-2-C-methyl-D-erythritol 2-phosphate = 2-C-methyl-D-erythritol 2,4-cyclic diphosphate + CMP. It functions in the pathway isoprenoid biosynthesis; isopentenyl diphosphate biosynthesis via DXP pathway; isopentenyl diphosphate from 1-deoxy-D-xylulose 5-phosphate: step 4/6. Involved in the biosynthesis of isopentenyl diphosphate (IPP) and dimethylallyl diphosphate (DMAPP), two major building blocks of isoprenoid compounds. Catalyzes the conversion of 4-diphosphocytidyl-2-C-methyl-D-erythritol 2-phosphate (CDP-ME2P) to 2-C-methyl-D-erythritol 2,4-cyclodiphosphate (ME-CPP) with a corresponding release of cytidine 5-monophosphate (CMP). The polypeptide is 2-C-methyl-D-erythritol 2,4-cyclodiphosphate synthase (Finegoldia magna (strain ATCC 29328 / DSM 20472 / WAL 2508) (Peptostreptococcus magnus)).